Here is a 696-residue protein sequence, read N- to C-terminus: Spindle assembly checkpoint component MAD1 (696 aa).

Disordered stretches follow at residues 1 to 22 (MSTGSSPFVDHKSNNSTISINN) and 394 to 415 (QIHANQQHKQQEQEKEENTENK). Over residues 402–413 (KQQEQEKEENTE) the composition is skewed to basic and acidic residues.

Belongs to the MAD1 family. In terms of assembly, component of the mitotic checkpoint complex (MCC).

It is found in the nucleus. In terms of biological role, central component of the spindle assembly checkpoint which is a feedback control that prevents cells with incompletely assembled spindles from leaving mitosis. This Candida albicans (strain SC5314 / ATCC MYA-2876) (Yeast) protein is Spindle assembly checkpoint component MAD1.